A 1232-amino-acid chain; its full sequence is Anion exchange protein 3 (1232 aa).

Pro residues predominate over residues 1–11; sequence MANGVIPPPGG. 2 disordered regions span residues 1-316 and 429-498; these read MANG…KLDR and NDDK…GDGH. Residues 1–708 are Cytoplasmic-facing; the sequence is MANGVIPPPG…DLRDALHSQC (708 aa). A compositionally biased stretch (basic and acidic residues) spans 58-75; that stretch reads DPEKPSRSYSERDFEFHR. Composition is skewed to basic residues over residues 76–97 and 104–113; these read HTSHHTHHPLSARLPPPHKLRR and RHTRRKRKKE. The span at 134–152 shows a compositional bias: acidic residues; sequence VDEEEEEEEEEEGESEAEP. Ser167, Ser170, Ser175, and Ser198 each carry phosphoserine. The span at 200–215 shows a compositional bias: low complexity; that stretch reads QHSSSSPSPRARASRL. A compositionally biased stretch (basic and acidic residues) spans 267-279; it reads DDMKSHRLEDNPG. Positions 280 to 289 are enriched in basic residues; it reads VRRHLVKKPS. Arg295 is modified (omega-N-methylarginine). A compositionally biased stretch (basic residues) spans 305–316; the sequence is LRRKKKKKKLDR. Positions 440–450 are enriched in polar residues; that stretch reads NPSSSSMNSVL. The segment covering 481–498 has biased composition (basic and acidic residues); it reads HDPDAKEKPLHMPGGDGH. The next 5 helical transmembrane spans lie at 709 to 731, 737 to 774, 794 to 816, 826 to 847, and 893 to 910; these read VAAVLFIYFAALSPAITFGGLLG, LMGVSELIVSTAVLGVLFSLLGAQPLLVVGFSGPLLVF, VWVGLWLVVFVLALVAAEGSFLV, IFAFLISLIFIYETFYKLYKVF, and ALLSLILMLGTFFIAFFL. The tract at residues 709 to 1232 is membrane (anion exchange); sequence VAAVLFIYFA…DEYNELHMPV (524 aa). Over 911–925 the chain is Cytoplasmic; it reads RKFRNSRFLGGKARR. 5 helical membrane passes run 926 to 946, 980 to 1002, 1028 to 1049, 1083 to 1128, and 1155 to 1191; these read IIGDFGIPISILVMVLVDYSI, PFPPWMMVAAAVPALLVLILIFM, LLLIGSLGGLCGLFGLPWLTAA, VTGV…IQLS, and MHLFTCIQLGCIALLWVVKSTAASLAFPFLLLLTVPL. The S-palmitoyl cysteine moiety is linked to residue Cys1165.

It belongs to the anion exchanger (TC 2.A.31) family. In terms of tissue distribution, expressed in the heart.

The protein localises to the cell membrane. It carries out the reaction hydrogencarbonate(in) + chloride(out) = hydrogencarbonate(out) + chloride(in). Functionally, sodium-independent anion exchanger which mediates the electroneutral exchange of chloride for bicarbonate ions across the cell membrane. May be involved in the regulation of intracellular pH, and the modulation of cardiac action potential. This Homo sapiens (Human) protein is Anion exchange protein 3 (SLC4A3).